The primary structure comprises 309 residues: tRNA dimethylallyltransferase (309 aa).

An ATP-binding site is contributed by 13-20 (GPTAVGKS). 15-20 (TAVGKS) contacts substrate.

This sequence belongs to the IPP transferase family. In terms of assembly, monomer. Mg(2+) is required as a cofactor.

The enzyme catalyses adenosine(37) in tRNA + dimethylallyl diphosphate = N(6)-dimethylallyladenosine(37) in tRNA + diphosphate. Functionally, catalyzes the transfer of a dimethylallyl group onto the adenine at position 37 in tRNAs that read codons beginning with uridine, leading to the formation of N6-(dimethylallyl)adenosine (i(6)A). The polypeptide is tRNA dimethylallyltransferase (Lacticaseibacillus paracasei (strain ATCC 334 / BCRC 17002 / CCUG 31169 / CIP 107868 / KCTC 3260 / NRRL B-441) (Lactobacillus paracasei)).